The following is a 108-amino-acid chain: uncharacterized protein (108 aa).

Positions M1 to A16 are cleaved as a signal peptide. The N-palmitoyl cysteine moiety is linked to residue C17. The S-diacylglycerol cysteine moiety is linked to residue C17.

The protein localises to the cell membrane. This is an uncharacterized protein from Escherichia coli (strain K12).